The primary structure comprises 162 residues: Caveolin-2 (162 aa).

Topologically, residues 1-86 (MGLETEKADV…FEISKYVMYK (86 aa)) are cytoplasmic. Y19 carries the phosphotyrosine modification. 2 positions are modified to phosphoserine: S20 and S36. Positions 87 to 107 (FLTVFLAIPLAFVAGILFATL) form an intramembrane region, helical. Over 108–162 (SCLHIWIIMPFVKTCLMVLPSVQTIWKSVTDVIIAPLCTSVGRSFSSISLQLSHD) the chain is Cytoplasmic.

This sequence belongs to the caveolin family. As to quaternary structure, homodimer. Caveolin-1 and -2 colocalize and form a stable hetero-oligomeric complex.

The protein localises to the golgi apparatus membrane. Its subcellular location is the cell membrane. The protein resides in the membrane. It is found in the caveola. In terms of biological role, may act as a scaffolding protein within caveolar membranes. Interacts directly with G-protein alpha subunits and can functionally regulate their activity. Caveolin-2 may function as an accessory protein in conjunction with caveolin-1. The sequence is that of Caveolin-2 (CAV2) from Microcebus murinus (Gray mouse lemur).